Consider the following 283-residue polypeptide: Orotidine 5'-phosphate decarboxylase (283 aa).

Residues D40, 62-64, 93-102, Y220, and R239 contribute to the substrate site; these read KTH and DRKFADIGNT. K95 (proton donor) is an active-site residue.

Belongs to the OMP decarboxylase family.

The enzyme catalyses orotidine 5'-phosphate + H(+) = UMP + CO2. It functions in the pathway pyrimidine metabolism; UMP biosynthesis via de novo pathway; UMP from orotate: step 2/2. This Mycosarcoma maydis (Corn smut fungus) protein is Orotidine 5'-phosphate decarboxylase (PYR6).